The following is a 162-amino-acid chain: 2-C-methyl-D-erythritol 2,4-cyclodiphosphate synthase (162 aa).

Asp12 and His14 together coordinate a divalent metal cation. 4-CDP-2-C-methyl-D-erythritol 2-phosphate-binding positions include 12 to 14 and 38 to 39; these read DVH and HS. Residue His46 coordinates a divalent metal cation. Residues 60-62, 136-139, Phe143, and Arg146 contribute to the 4-CDP-2-C-methyl-D-erythritol 2-phosphate site; these read DIG and TTTE.

It belongs to the IspF family. As to quaternary structure, homotrimer. A divalent metal cation serves as cofactor.

The catalysed reaction is 4-CDP-2-C-methyl-D-erythritol 2-phosphate = 2-C-methyl-D-erythritol 2,4-cyclic diphosphate + CMP. It functions in the pathway isoprenoid biosynthesis; isopentenyl diphosphate biosynthesis via DXP pathway; isopentenyl diphosphate from 1-deoxy-D-xylulose 5-phosphate: step 4/6. In terms of biological role, involved in the biosynthesis of isopentenyl diphosphate (IPP) and dimethylallyl diphosphate (DMAPP), two major building blocks of isoprenoid compounds. Catalyzes the conversion of 4-diphosphocytidyl-2-C-methyl-D-erythritol 2-phosphate (CDP-ME2P) to 2-C-methyl-D-erythritol 2,4-cyclodiphosphate (ME-CPP) with a corresponding release of cytidine 5-monophosphate (CMP). This is 2-C-methyl-D-erythritol 2,4-cyclodiphosphate synthase from Porphyromonas gingivalis (strain ATCC 33277 / DSM 20709 / CIP 103683 / JCM 12257 / NCTC 11834 / 2561).